The chain runs to 475 residues: Ankyrin repeat, SAM and basic leucine zipper domain-containing protein 1 (475 aa).

Positions 1 to 22 are disordered; sequence MAAGALRGLPVAGGGESSESED. Phosphoserine occurs at positions 17, 18, and 20. ANK repeat units follow at residues 45–74, 78–107, 110–144, 148–177, 181–210, and 214–243; these read EKKE…SVDS, YGWT…NASF, DKQT…DPNV, RLMT…EVNT, NGYT…NKML, and DGKM…PLEG. The 63-residue stretch at 272–334 folds into the SAM domain; it reads SYTAFGDLEV…KILATLKELQ (63 aa).

As to quaternary structure, interacts with DDX4, PIWIL1, RANBP9 and TDRD1.

It localises to the cytoplasm. Its function is as follows. Plays a central role during spermatogenesis by repressing transposable elements and preventing their mobilization, which is essential for the germline integrity. Acts via the piRNA metabolic process, which mediates the repression of transposable elements during meiosis by forming complexes composed of piRNAs and Piwi proteins and governs the methylation and subsequent repression of transposons. Its association with pi-bodies suggests a participation in the primary piRNAs metabolic process. Required prior to the pachytene stage to facilitate the production of multiple types of piRNAs, including those associated with repeats involved in the regulation of retrotransposons. May act by mediating protein-protein interactions during germ cell maturation. This Colobus guereza (Mantled guereza) protein is Ankyrin repeat, SAM and basic leucine zipper domain-containing protein 1 (ASZ1).